Here is a 397-residue protein sequence, read N- to C-terminus: Acetate kinase (397 aa).

Asparagine 7 lines the Mg(2+) pocket. ATP is bound at residue lysine 14. Arginine 90 contributes to the substrate binding site. Aspartate 147 serves as the catalytic Proton donor/acceptor. ATP contacts are provided by residues 207 to 211 (HLGNG), 282 to 284 (DFR), and 330 to 334 (GLGEN). Glutamate 383 lines the Mg(2+) pocket.

This sequence belongs to the acetokinase family. In terms of assembly, homodimer. Mg(2+) serves as cofactor. Requires Mn(2+) as cofactor.

The protein resides in the cytoplasm. It catalyses the reaction acetate + ATP = acetyl phosphate + ADP. It functions in the pathway metabolic intermediate biosynthesis; acetyl-CoA biosynthesis; acetyl-CoA from acetate: step 1/2. Its function is as follows. Catalyzes the formation of acetyl phosphate from acetate and ATP. Can also catalyze the reverse reaction. The sequence is that of Acetate kinase from Clostridium botulinum (strain Kyoto / Type A2).